Reading from the N-terminus, the 466-residue chain is Asparagine--tRNA ligase (466 aa).

Belongs to the class-II aminoacyl-tRNA synthetase family. In terms of assembly, homodimer.

It is found in the cytoplasm. The enzyme catalyses tRNA(Asn) + L-asparagine + ATP = L-asparaginyl-tRNA(Asn) + AMP + diphosphate + H(+). This Colwellia psychrerythraea (strain 34H / ATCC BAA-681) (Vibrio psychroerythus) protein is Asparagine--tRNA ligase.